Here is a 240-residue protein sequence, read N- to C-terminus: Putative S-adenosylmethionine-dependent methyltransferase RcsF (240 aa).

The region spanning 5 to 142 (ISPIGHVRSC…YVPYADIVPD (138 aa)) is the TsaA-like domain. Residues 22-24 (PRQ), 63-64 (HQ), arginine 91, and 122-125 (LDGT) contribute to the S-adenosyl-L-methionine site.

It belongs to the tRNA methyltransferase O family.

The protein is Putative S-adenosylmethionine-dependent methyltransferase RcsF (rcsF) of Pseudomonas aeruginosa.